A 388-amino-acid chain; its full sequence is Lipid-A-disaccharide synthase (388 aa).

Belongs to the LpxB family.

The catalysed reaction is a lipid X + a UDP-2-N,3-O-bis[(3R)-3-hydroxyacyl]-alpha-D-glucosamine = a lipid A disaccharide + UDP + H(+). It participates in bacterial outer membrane biogenesis; LPS lipid A biosynthesis. Its function is as follows. Condensation of UDP-2,3-diacylglucosamine and 2,3-diacylglucosamine-1-phosphate to form lipid A disaccharide, a precursor of lipid A, a phosphorylated glycolipid that anchors the lipopolysaccharide to the outer membrane of the cell. The polypeptide is Lipid-A-disaccharide synthase (Sulfurihydrogenibium sp. (strain YO3AOP1)).